The chain runs to 325 residues: Putative HTH-type transcriptional regulatory protein MK1005 (325 aa).

The 63-residue stretch at 128 to 190 (VDELDVSRVR…FERRVAELLE (63 aa)) folds into the HTH cro/C1-type domain. The segment at residues 139–158 (RQLRREGGRITLARAEEADV) is a DNA-binding region (H-T-H motif).

The sequence is that of Putative HTH-type transcriptional regulatory protein MK1005 from Methanopyrus kandleri (strain AV19 / DSM 6324 / JCM 9639 / NBRC 100938).